We begin with the raw amino-acid sequence, 151 residues long: Trivalent organoarsenical cleaving enzyme (151 aa).

The 117-residue stretch at 2–118 (SRVQLALRVP…GGEPWEVYVV (117 aa)) folds into the VOC domain. A Fe(2+)-binding site is contributed by glutamine 5. Position 61 (aspartate 61) interacts with roxarsone (III). Histidine 62 contacts Fe(2+). Roxarsone (III) contacts are provided by cysteine 95 and cysteine 96. Glutamate 114 contacts Fe(2+).

In terms of assembly, monomer. It depends on Fe(2+) as a cofactor.

The enzyme catalyses methylarsonous acid + AH2 + O2 = arsenite + methanol + A + H(+). The catalysed reaction is roxarsone (III) + AH2 + O2 = 4-hydroxy-3-nitrocyclohexa-2,5-dien-1-one + arsenite + A + H(+). It catalyses the reaction nitarsone (III) + AH2 + O2 = 4-nitrocyclohexa-2,5-dien-1-one + arsenite + A + H(+). It carries out the reaction 4-aminophenylarsonous acid + AH2 + O2 = 4-aminocyclohexa-2,5-dien-1-one + arsenite + A. Nonheme iron-dependent dioxygenase that can break carbon-arsenic bonds, playing a role in the detoxification of environmental organoarsenical compounds. Catalyzes the oxygen-dependent demethylation of highly toxic methylarsonous acid (MAs(III)) to arsenite, which can then be exported out of the cell. Can also cleave the C-As bond in several trivalent aromatic arsenicals, including roxarsone (III), nitarsone (III) and (4-aminophenyl)arsonous acid. Organoarsenical degradation by this enzyme is proposed to have a significant impact on the arsenic biogeocycle that maintains a balance between organic and inorganic species. This Thermomonospora curvata (strain ATCC 19995 / DSM 43183 / JCM 3096 / KCTC 9072 / NBRC 15933 / NCIMB 10081 / Henssen B9) protein is Trivalent organoarsenical cleaving enzyme.